The chain runs to 459 residues: Argininosuccinate lyase (459 aa).

The protein belongs to the lyase 1 family. Argininosuccinate lyase subfamily.

It is found in the cytoplasm. It catalyses the reaction 2-(N(omega)-L-arginino)succinate = fumarate + L-arginine. It functions in the pathway amino-acid biosynthesis; L-arginine biosynthesis; L-arginine from L-ornithine and carbamoyl phosphate: step 3/3. The chain is Argininosuccinate lyase from Prochlorococcus marinus (strain MIT 9301).